The primary structure comprises 310 residues: 17-beta-hydroxysteroid dehydrogenase type 3 (310 aa).

Residue Gly-48 to Leu-77 coordinates NADP(+). Ser-185 provides a ligand contact to substrate. The active-site Proton acceptor is Tyr-198.

The protein belongs to the short-chain dehydrogenases/reductases (SDR) family. 17-beta-HSD 3 subfamily. In terms of tissue distribution, testis.

Its subcellular location is the endoplasmic reticulum. The catalysed reaction is a 17beta-hydroxy steroid + NADP(+) = a 17-oxo steroid + NADPH + H(+). The enzyme catalyses testosterone + NADP(+) = androst-4-ene-3,17-dione + NADPH + H(+). It carries out the reaction 17beta-estradiol + NADP(+) = estrone + NADPH + H(+). It catalyses the reaction 3beta-hydroxyandrost-5-en-17-one + NADPH + H(+) = androst-5-en-3beta,17beta-diol + NADP(+). The catalysed reaction is 17beta-hydroxy-5alpha-androstan-3-one + NADP(+) = 5alpha-androstan-3,17-dione + NADPH + H(+). The enzyme catalyses androsterone + NADPH + H(+) = 5alpha-androstane-3alpha,17beta-diol + NADP(+). It carries out the reaction 3beta-hydroxy-5alpha-androstan-17-one + NADPH + H(+) = 5alpha-androstane-3beta,17beta-diol + NADP(+). It catalyses the reaction androst-4-ene-3,11,17-trione + NADPH + H(+) = 17beta-hydroxyandrost-4-ene-3,11-dione + NADP(+). The catalysed reaction is 11beta-hydroxyandrost-4-ene-3,17-dione + NADPH + H(+) = 11beta,17beta-dihydroxyandrost-4-ene-3-one + NADP(+). Its pathway is hormone biosynthesis; testosterone biosynthesis. The protein operates within steroid metabolism. Its function is as follows. Catalyzes the conversion of 17-oxosteroids to 17beta-hydroxysteroids. Favors the reduction of androstenedione to testosterone. Testosterone is the key androgen driving male development and function. Uses NADPH while the two other EDH17B enzymes use NADH. Androgens such as epiandrosterone, dehydroepiandrosterone, androsterone and androstanedione are accepted as substrates and reduced at C-17. Can reduce 11-ketoandrostenedione as well as 11beta-hydroxyandrostenedione at C-17 to the respective testosterone forms. The sequence is that of 17-beta-hydroxysteroid dehydrogenase type 3 from Homo sapiens (Human).